Consider the following 288-residue polypeptide: Diaminopimelate epimerase (288 aa).

Substrate-binding residues include Asn13, Gln51, and Asn71. Cys80 functions as the Proton donor in the catalytic mechanism. Substrate contacts are provided by residues 81 to 82 (GN), Asn166, Asn200, and 218 to 219 (ER). Residue Cys227 is the Proton acceptor of the active site. 228-229 (GT) is a binding site for substrate.

This sequence belongs to the diaminopimelate epimerase family. As to quaternary structure, homodimer.

It is found in the cytoplasm. It catalyses the reaction (2S,6S)-2,6-diaminopimelate = meso-2,6-diaminopimelate. The protein operates within amino-acid biosynthesis; L-lysine biosynthesis via DAP pathway; DL-2,6-diaminopimelate from LL-2,6-diaminopimelate: step 1/1. Catalyzes the stereoinversion of LL-2,6-diaminopimelate (L,L-DAP) to meso-diaminopimelate (meso-DAP), a precursor of L-lysine and an essential component of the bacterial peptidoglycan. The sequence is that of Diaminopimelate epimerase from Caulobacter vibrioides (strain ATCC 19089 / CIP 103742 / CB 15) (Caulobacter crescentus).